The primary structure comprises 130 residues: MGLLLLLVGIGGGFGAMARFALTQATASISKQIPLGILLCNIIGSLIIGMMAAFLIETKLFNEDVSAYVRFLLVTGFLGGFTTFSSFSLDILNLLQRGEIFIAIGYIMVSVLASLIAVILGFYIVMGVYK.

A run of 4 helical transmembrane segments spans residues 2–22 (GLLL…RFAL), 36–56 (GILL…AFLI), 71–91 (FLLV…SLDI), and 100–120 (IFIA…AVIL). Residues G79 and T82 each coordinate Na(+).

Belongs to the fluoride channel Fluc/FEX (TC 1.A.43) family.

It localises to the cell inner membrane. It catalyses the reaction fluoride(in) = fluoride(out). Its activity is regulated as follows. Na(+) is not transported, but it plays an essential structural role and its presence is essential for fluoride channel function. Functionally, fluoride-specific ion channel. Important for reducing fluoride concentration in the cell, thus reducing its toxicity. The protein is Fluoride-specific ion channel FluC of Francisella tularensis subsp. mediasiatica (strain FSC147).